Here is a 456-residue protein sequence, read N- to C-terminus: GPI-anchored protein 13 (456 aa).

The signal sequence occupies residues 1-23 (MRSPSLAVAATTVLGLFSSSALA). N27 carries N-linked (GlcNAc...) asparagine glycosylation. The GPI-anchor amidated glycine moiety is linked to residue G433. A propeptide spans 434–456 (AAAVNVVPTTAFGLFAIILASIF) (removed in mature form).

In terms of processing, the GPI-anchor is attached to the protein in the endoplasmic reticulum and serves to target the protein to the cell surface. There, the glucosamine-inositol phospholipid moiety is cleaved off and the GPI-modified mannoprotein is covalently attached via its lipidless GPI glycan remnant to the 1,6-beta-glucan of the outer cell wall layer.

The protein localises to the secreted. It is found in the cell wall. The protein resides in the membrane. Functionally, cell wall protein which contributes to cell wall synthesis and is important for acquiring normal surface properties. Required for virulence in a mouse infection model. This Candida albicans (strain SC5314 / ATCC MYA-2876) (Yeast) protein is GPI-anchored protein 13 (PGA13).